The sequence spans 389 residues: Large ribosomal subunit protein uL3 (389 aa).

This sequence belongs to the universal ribosomal protein uL3 family. In terms of assembly, component of the large ribosomal subunit. Mature ribosomes consist of a small (40S) and a large (60S) subunit. The 40S subunit contains about 32 different proteins and 1 molecule of RNA (18S). The 60S subunit contains 45 different proteins and 3 molecules of RNA (25S, 5.8S and 5S).

It localises to the cytoplasm. Functionally, component of the ribosome, a large ribonucleoprotein complex responsible for the synthesis of proteins in the cell. The small ribosomal subunit (SSU) binds messenger RNAs (mRNAs) and translates the encoded message by selecting cognate aminoacyl-transfer RNA (tRNA) molecules. The large subunit (LSU) contains the ribosomal catalytic site termed the peptidyl transferase center (PTC), which catalyzes the formation of peptide bonds, thereby polymerizing the amino acids delivered by tRNAs into a polypeptide chain. The nascent polypeptides leave the ribosome through a tunnel in the LSU and interact with protein factors that function in enzymatic processing, targeting, and the membrane insertion of nascent chains at the exit of the ribosomal tunnel. RPL3 plays a role in coordinating processes of accommodating the aminoacyl-tRNA in the PTC. This Candida albicans (strain SC5314 / ATCC MYA-2876) (Yeast) protein is Large ribosomal subunit protein uL3.